A 55-amino-acid chain; its full sequence is Bowman-Birk type proteinase inhibitor B1 (55 aa).

Disulfide bonds link Cys6-Cys53, Cys12-Cys17, Cys26-Cys33, and Cys30-Cys45.

Belongs to the Bowman-Birk serine protease inhibitor family. In terms of tissue distribution, expressed in bulb (at protein level).

In terms of biological role, serine protease inhibitor. Weakly inhibits trypsin (Ki = 167 nM). Does not inhibit bacterial subtilisin or mamallian chymotrypsin. The sequence is that of Bowman-Birk type proteinase inhibitor B1 from Hyacinthus orientalis (Common hyacinth).